The primary structure comprises 475 residues: 3-isopropylmalate dehydratase large subunit (475 aa).

[4Fe-4S] cluster-binding residues include Cys-353, Cys-414, and Cys-417.

Belongs to the aconitase/IPM isomerase family. LeuC type 1 subfamily. As to quaternary structure, heterodimer of LeuC and LeuD. Requires [4Fe-4S] cluster as cofactor.

It catalyses the reaction (2R,3S)-3-isopropylmalate = (2S)-2-isopropylmalate. It functions in the pathway amino-acid biosynthesis; L-leucine biosynthesis; L-leucine from 3-methyl-2-oxobutanoate: step 2/4. Catalyzes the isomerization between 2-isopropylmalate and 3-isopropylmalate, via the formation of 2-isopropylmaleate. In Stutzerimonas stutzeri (strain A1501) (Pseudomonas stutzeri), this protein is 3-isopropylmalate dehydratase large subunit.